Here is a 488-residue protein sequence, read N- to C-terminus: Bifunctional protein GlmU (488 aa).

Positions 1-237 are pyrophosphorylase; it reads MPRTRTPLAA…AEEASGVNDR (237 aa). Residues 13–16, lysine 27, glutamine 82, 87–88, 110–112, glycine 149, glutamate 164, asparagine 179, and asparagine 235 each bind UDP-N-acetyl-alpha-D-glucosamine; these read LAAG, GT, and SGD. Aspartate 112 contributes to the Mg(2+) binding site. Residue asparagine 235 participates in Mg(2+) binding. The segment at 238-258 is linker; it reads IELARANRVMVGRLAEAFMRA. An N-acetyltransferase region spans residues 259–488; sequence GVTIEDPARF…KGRPAARRAS (230 aa). UDP-N-acetyl-alpha-D-glucosamine is bound by residues arginine 341 and lysine 359. Residue histidine 371 is the Proton acceptor of the active site. 2 residues coordinate UDP-N-acetyl-alpha-D-glucosamine: tyrosine 374 and asparagine 385. Acetyl-CoA-binding positions include alanine 388, 394–395, serine 413, alanine 431, and arginine 448; that span reads NY. A disordered region spans residues 459–488; that stretch reads AQRQAEKQMKGTATGPAPARKGRPAARRAS. Residues 478–488 are compositionally biased toward basic residues; the sequence is RKGRPAARRAS.

In the N-terminal section; belongs to the N-acetylglucosamine-1-phosphate uridyltransferase family. This sequence in the C-terminal section; belongs to the transferase hexapeptide repeat family. Homotrimer. Mg(2+) is required as a cofactor.

It localises to the cytoplasm. It catalyses the reaction alpha-D-glucosamine 1-phosphate + acetyl-CoA = N-acetyl-alpha-D-glucosamine 1-phosphate + CoA + H(+). The enzyme catalyses N-acetyl-alpha-D-glucosamine 1-phosphate + UTP + H(+) = UDP-N-acetyl-alpha-D-glucosamine + diphosphate. Its pathway is nucleotide-sugar biosynthesis; UDP-N-acetyl-alpha-D-glucosamine biosynthesis; N-acetyl-alpha-D-glucosamine 1-phosphate from alpha-D-glucosamine 6-phosphate (route II): step 2/2. It functions in the pathway nucleotide-sugar biosynthesis; UDP-N-acetyl-alpha-D-glucosamine biosynthesis; UDP-N-acetyl-alpha-D-glucosamine from N-acetyl-alpha-D-glucosamine 1-phosphate: step 1/1. It participates in bacterial outer membrane biogenesis; LPS lipid A biosynthesis. Functionally, catalyzes the last two sequential reactions in the de novo biosynthetic pathway for UDP-N-acetylglucosamine (UDP-GlcNAc). The C-terminal domain catalyzes the transfer of acetyl group from acetyl coenzyme A to glucosamine-1-phosphate (GlcN-1-P) to produce N-acetylglucosamine-1-phosphate (GlcNAc-1-P), which is converted into UDP-GlcNAc by the transfer of uridine 5-monophosphate (from uridine 5-triphosphate), a reaction catalyzed by the N-terminal domain. The sequence is that of Bifunctional protein GlmU from Anaeromyxobacter dehalogenans (strain 2CP-C).